A 58-amino-acid polypeptide reads, in one-letter code: Small ribosomal subunit protein bS21 (58 aa).

Residues 34 to 58 (KREHYESPSVRRKKKSEAARRRKRR) are disordered. The segment covering 43–58 (VRRKKKSEAARRRKRR) has biased composition (basic residues).

The protein belongs to the bacterial ribosomal protein bS21 family.

This chain is Small ribosomal subunit protein bS21, found in Caldicellulosiruptor bescii (strain ATCC BAA-1888 / DSM 6725 / KCTC 15123 / Z-1320) (Anaerocellum thermophilum).